A 628-amino-acid chain; its full sequence is Junctophilin-4 (628 aa).

Residues 1-606 lie on the Cytoplasmic side of the membrane; it reads MSPGGKFDFD…RPAQPGAANP (606 aa). MORN repeat units lie at residues 50–72, 74–95, 96–117, 118–140, 141–163, and 164–186; these read LGVF…KREG, GVER…KGRS, GVWE…FQDG, YGTE…KRHG, YGVR…RTSL, and DSGH…EGGS. Disordered regions lie at residues 158 to 214 and 231 to 276; these read PRRT…RTPA and GGRR…LIEG. Over residues 170 to 179 the composition is skewed to pro residues; the sequence is PPTPPPPLPL. Low complexity-rich tracts occupy residues 231–241 and 253–272; these read GGRRSSLGSKR and GSTG…APPA. MORN repeat units follow at residues 317–339 and 340–362; these read YGRT…RLVH and GGRV…KVDR. The interval 415-602 is disordered; sequence DLQPMLEAPG…AATERPAQPG (188 aa). The segment covering 432 to 443 has biased composition (acidic residues); that stretch reads EGSDTEPLDEDS. 2 stretches are compositionally biased toward low complexity: residues 453-467 and 528-541; these read PSEG…PASS and GSPL…SSGS. The helical; Anchor for type IV membrane protein transmembrane segment at 607 to 628 threads the bilayer; it reads LVVGAVALLDLSLAFLFSQLLT.

The protein belongs to the junctophilin family.

It localises to the cell membrane. The protein resides in the endoplasmic reticulum membrane. In terms of biological role, junctophilins contribute to the formation of junctional membrane complexes (JMCs) which link the plasma membrane with the endoplasmic or sarcoplasmic reticulum in excitable cells. Provides a structural foundation for functional cross-talk between the cell surface and intracellular calcium release channels. JPH4 is brain-specific and appears to have an active role in certain neurons involved in motor coordination and memory. The chain is Junctophilin-4 (JPH4) from Homo sapiens (Human).